The chain runs to 364 residues: Apyrase (364 aa).

Positions 1–35 (MRSSYRVGNPIRFQPTNVVGLLLLSLVLSFMLVQS) are cleaved as a signal peptide.

This sequence belongs to the apyrase family. The cofactor is Ca(2+). As to expression, salivary gland (at protein level).

It localises to the secreted. The enzyme catalyses a ribonucleoside 5'-triphosphate + 2 H2O = a ribonucleoside 5'-phosphate + 2 phosphate + 2 H(+). Functionally, facilitates hematophagy by inhibiting ADP-dependent platelet aggregation in the host. Cleaves adenosine triphosphate (ATP) and adenosine diphosphate (ADP) to adenosine monophosphate (AMP) and inorganic phosphate in calcium-dependent manner. The protein is Apyrase of Cimex lectularius (Bed bug).